Consider the following 96-residue polypeptide: Co-chaperonin GroES (96 aa).

The protein belongs to the GroES chaperonin family. Heptamer of 7 subunits arranged in a ring. Interacts with the chaperonin GroEL.

Its subcellular location is the cytoplasm. In terms of biological role, together with the chaperonin GroEL, plays an essential role in assisting protein folding. The GroEL-GroES system forms a nano-cage that allows encapsulation of the non-native substrate proteins and provides a physical environment optimized to promote and accelerate protein folding. GroES binds to the apical surface of the GroEL ring, thereby capping the opening of the GroEL channel. The chain is Co-chaperonin GroES from Coxiella burnetii (strain Dugway 5J108-111).